The sequence spans 126 residues: Large ribosomal subunit protein eL8 (126 aa).

This sequence belongs to the eukaryotic ribosomal protein eL8 family. In terms of assembly, part of the 50S ribosomal subunit. Probably part of the RNase P complex.

It localises to the cytoplasm. Its function is as follows. Multifunctional RNA-binding protein that recognizes the K-turn motif in ribosomal RNA, the RNA component of RNase P, box H/ACA, box C/D and box C'/D' sRNAs. In Cenarchaeum symbiosum (strain A), this protein is Large ribosomal subunit protein eL8.